The chain runs to 310 residues: CCR4-NOT transcription complex subunit 7 (310 aa).

A divalent metal cation-binding residues include Asp51, Glu53, Asp172, and Asp245.

Belongs to the CAF1 family. Component of the CCR4-NOT complex at least composed of ccf-1, ccr-4 and let-711, which is required for germ cell development in hermaphrodites. Within the complex interacts with let-711. Highly expressed in the germline. In particular, highly expressed in germ cells that enter meiosis and progress through the pachytene stage.

It is found in the nucleus. Its subcellular location is the cytoplasm. It carries out the reaction Exonucleolytic cleavage of poly(A) to 5'-AMP.. Functionally, catalytic component of the CCR4-NOT complex which is one of the major cellular mRNA deadenylases and is linked to various cellular processes including bulk mRNA degradation, miRNA-mediated repression, translational repression during translational initiation and general transcription regulation. Within the complex, plays a role in miRNA-mediated deadenylation in embryos. Within the complex promotes germ cell development and fertility in hermaphrodites. Additional complex functions may be a consequence of its influence on mRNA expression. The protein is CCR4-NOT transcription complex subunit 7 of Caenorhabditis elegans.